The sequence spans 106 residues: Iron-sulfur cluster assembly protein CyaY (106 aa).

It belongs to the frataxin family.

Its function is as follows. Involved in iron-sulfur (Fe-S) cluster assembly. May act as a regulator of Fe-S biogenesis. This is Iron-sulfur cluster assembly protein CyaY from Serratia proteamaculans (strain 568).